The primary structure comprises 428 residues: Immunoglobulin superfamily member 11 (428 aa).

Residues 1–22 (MTRRRSAPASWLLVSLLGVATS) form the signal peptide. The Ig-like V-type domain occupies 23–136 (LEVSESPGSV…DRGGRNIGVT (114 aa)). Topologically, residues 23–240 (LEVSESPGSV…QVISPQPRSV (218 aa)) are extracellular. 2 disulfides stabilise this stretch: Cys-44–Cys-120 and Cys-165–Cys-215. Asn-102 carries N-linked (GlcNAc...) asparagine glycosylation. Positions 144–234 (PSAPQCQIQG…TCLLDLQVIS (91 aa)) constitute an Ig-like C2-type domain. The helical transmembrane segment at 241 to 261 (GVIAGAVGTGAVLIVICLALI) threads the bilayer. The Cytoplasmic segment spans residues 262–428 (SGAFFYWRSK…PAQSRAGSLV (167 aa)). At Arg-375 the chain carries Omega-N-methylarginine. Over residues 376–389 (GSSPQVLPRNNGSV) the composition is skewed to polar residues. Positions 376–396 (GSSPQVLPRNNGSVSRKPWPQ) are disordered.

N-glycosylated. Highly expressed in testis and detected in kidney and adrenal gland. In brain, expressed in commissure fibers of the corpus callosum and pyramidal cell layers of the dentate gyrus and hippocampus where it is probably expressed by both neurons and glial cells.

It localises to the cell membrane. Functions as a cell adhesion molecule through homophilic interaction. Stimulates cell growth. In Mus musculus (Mouse), this protein is Immunoglobulin superfamily member 11 (Igsf11).